Reading from the N-terminus, the 850-residue chain is Polyhomeotic-like protein 2 (850 aa).

Disordered regions lie at residues 1 to 79, 233 to 314, 335 to 386, 402 to 436, and 528 to 553; these read MENE…QYLQ, QQTP…RAVP, LPQP…DHAL, THVH…PPQR, and MTSG…KPPQ. The segment covering 15-32 has biased composition (low complexity); the sequence is SVTTNTSGTNSSSGCISS. The interval 33–56 is interaction with BMI1; that stretch reads SGGGGGSGGRPTAPQISVYSGIPD. The span at 343-352 shows a compositional bias: low complexity; it reads PQPQFVAQQQ. Composition is skewed to polar residues over residues 368-380 and 402-425; these read LASV…LQSS and THVH…SQNG. Residues 529 to 543 show a composition bias toward low complexity; it reads TSGNGNSASSIAGTA. An HD1 motif is present at residues 550-579; that stretch reads KPPQAIVKPQILTHVIEGFVIQEGAEPFPV. Residues lysine 590 and lysine 592 each participate in a glycyl lysine isopeptide (Lys-Gly) (interchain with G-Cter in SUMO2) cross-link. The segment at 597–624 is disordered; that stretch reads FLPEKPPQQDHTTTTDSEMEEPYLQESK. The residue at position 611 (threonine 611) is a Phosphothreonine. The residue at position 613 (serine 613) is a Phosphoserine. Lysine 624 participates in a covalent cross-link: Glycyl lysine isopeptide (Lys-Gly) (interchain with G-Cter in SUMO2). The segment at 625-659 adopts an FCS-type zinc-finger fold; that stretch reads EEGTPLKLKCELCGRVDFAYKFKRSKRFCSMACAK. Residues cysteine 634, cysteine 637, cysteine 653, and cysteine 657 each contribute to the Zn(2+) site. Disordered regions lie at residues 676-712 and 725-764; these read RSKL…SGTV and SQED…LDLP. Residue lysine 694 forms a Glycyl lysine isopeptide (Lys-Gly) (interchain with G-Cter in SUMO2) linkage. Over residues 696–712 the composition is skewed to polar residues; it reads SLPTLTKDTKKQPSGTV. Phosphoserine is present on serine 743. The region spanning 786–850 is the SAM domain; sequence WNVEDVYEFI…YARISMLKDS (65 aa). Residue lysine 839 forms a Glycyl lysine isopeptide (Lys-Gly) (interchain with G-Cter in SUMO2) linkage.

As to quaternary structure, component of a PRC1-like complex. Interacts with CBX4. Interacts with BMI1, PCGF2, PHC1 and RNF2. Interacts with CHTOP. Interacts with the N-terminal region of the SP1 transcription factor and with MAPKAPK2. Interacts with SAMD7. Interacts with SAMD11. In terms of tissue distribution, isoform 2 is ubiquitously expressed in embryos and adult tissues at much higher level than isoform 1.

It localises to the nucleus. In terms of biological role, component of a Polycomb group (PcG) multiprotein PRC1-like complex, a complex class required to maintain the transcriptionally repressive state of many genes, including Hox genes, throughout development. PcG PRC1 complex acts via chromatin remodeling and modification of histones; it mediates monoubiquitination of histone H2A 'Lys-119', rendering chromatin heritably changed in its expressibility. This is Polyhomeotic-like protein 2 (Phc2) from Mus musculus (Mouse).